The following is a 430-amino-acid chain: Serine hydroxymethyltransferase (430 aa).

Residues leucine 126 and 130–132 contribute to the (6S)-5,6,7,8-tetrahydrofolate site; that span reads GHL. Position 235 is an N6-(pyridoxal phosphate)lysine (lysine 235).

This sequence belongs to the SHMT family. Homodimer. Pyridoxal 5'-phosphate is required as a cofactor.

Its subcellular location is the cytoplasm. The catalysed reaction is (6R)-5,10-methylene-5,6,7,8-tetrahydrofolate + glycine + H2O = (6S)-5,6,7,8-tetrahydrofolate + L-serine. It functions in the pathway one-carbon metabolism; tetrahydrofolate interconversion. The protein operates within amino-acid biosynthesis; glycine biosynthesis; glycine from L-serine: step 1/1. Functionally, catalyzes the reversible interconversion of serine and glycine with tetrahydrofolate (THF) serving as the one-carbon carrier. This reaction serves as the major source of one-carbon groups required for the biosynthesis of purines, thymidylate, methionine, and other important biomolecules. Also exhibits THF-independent aldolase activity toward beta-hydroxyamino acids, producing glycine and aldehydes, via a retro-aldol mechanism. The polypeptide is Serine hydroxymethyltransferase (Leifsonia xyli subsp. xyli (strain CTCB07)).